Here is a 917-residue protein sequence, read N- to C-terminus: Alanine--tRNA ligase (917 aa).

Zn(2+) contacts are provided by histidine 592, histidine 596, cysteine 694, and histidine 698.

This sequence belongs to the class-II aminoacyl-tRNA synthetase family. Zn(2+) is required as a cofactor.

The protein resides in the cytoplasm. It catalyses the reaction tRNA(Ala) + L-alanine + ATP = L-alanyl-tRNA(Ala) + AMP + diphosphate. Its function is as follows. Catalyzes the attachment of alanine to tRNA(Ala) in a two-step reaction: alanine is first activated by ATP to form Ala-AMP and then transferred to the acceptor end of tRNA(Ala). Also edits incorrectly charged Ser-tRNA(Ala) and Gly-tRNA(Ala) via its editing domain. This chain is Alanine--tRNA ligase, found in Sorangium cellulosum (strain So ce56) (Polyangium cellulosum (strain So ce56)).